We begin with the raw amino-acid sequence, 180 residues long: Probable galaptin lec-8 (180 aa).

Residues 11-138 (SAHAIREQLR…AAHIDEISFS (128 aa)) enclose the Galectin domain.

This chain is Probable galaptin lec-8 (lec-8), found in Caenorhabditis elegans.